The primary structure comprises 281 residues: Probable replication-associated protein repA1 (281 aa).

It belongs to the IncFII RepA family.

This protein is essential for plasmid replication; it is involved in copy control functions. This chain is Probable replication-associated protein repA1 (repA1), found in Buchnera aphidicola subsp. Cinara cedri (strain Cc).